The primary structure comprises 115 residues: NADH-ubiquinone oxidoreductase chain 3 (115 aa).

A run of 3 helical transmembrane segments spans residues 4–24 (MLIL…AFWL), 55–75 (FFLV…LLPL), and 86–106 (MLMT…AYEW).

Belongs to the complex I subunit 3 family. In terms of assembly, core subunit of respiratory chain NADH dehydrogenase (Complex I) which is composed of 45 different subunits. Interacts with TMEM186. Interacts with TMEM242.

It localises to the mitochondrion inner membrane. The enzyme catalyses a ubiquinone + NADH + 5 H(+)(in) = a ubiquinol + NAD(+) + 4 H(+)(out). In terms of biological role, core subunit of the mitochondrial membrane respiratory chain NADH dehydrogenase (Complex I) which catalyzes electron transfer from NADH through the respiratory chain, using ubiquinone as an electron acceptor. Essential for the catalytic activity of complex I. The chain is NADH-ubiquinone oxidoreductase chain 3 from Microtus pennsylvanicus (Meadow vole).